We begin with the raw amino-acid sequence, 127 residues long: MAIVGLGTDIVEIERIQAHVARAGDKLAKRVLTEVELAIYTAHSQPSRYLAKRFAAKEAAAKALGTGIGRGVSFQHIHIGNNEDGAPTIHFTEGALARLQQLKATVGHISIADEKSYAIATVIIESQ.

Residues Asp9 and Glu58 each contribute to the Mg(2+) site.

Belongs to the P-Pant transferase superfamily. AcpS family. Mg(2+) is required as a cofactor.

It is found in the cytoplasm. It catalyses the reaction apo-[ACP] + CoA = holo-[ACP] + adenosine 3',5'-bisphosphate + H(+). Its function is as follows. Transfers the 4'-phosphopantetheine moiety from coenzyme A to a Ser of acyl-carrier-protein. This is Holo-[acyl-carrier-protein] synthase from Shewanella baltica (strain OS155 / ATCC BAA-1091).